A 120-amino-acid polypeptide reads, in one-letter code: Flagellar transcriptional regulator FlhD (120 aa).

This sequence belongs to the FlhD family. As to quaternary structure, homodimer; disulfide-linked. Forms a heterohexamer composed of two FlhC and four FlhD subunits. Each FlhC binds a FlhD dimer, forming a heterotrimer, and a hexamer assembles by dimerization of two heterotrimers.

The protein resides in the cytoplasm. Functionally, functions in complex with FlhC as a master transcriptional regulator that regulates transcription of several flagellar and non-flagellar operons by binding to their promoter region. Activates expression of class 2 flagellar genes, including fliA, which is a flagellum-specific sigma factor that turns on the class 3 genes. Also regulates genes whose products function in a variety of physiological pathways. The polypeptide is Flagellar transcriptional regulator FlhD (Erwinia tasmaniensis (strain DSM 17950 / CFBP 7177 / CIP 109463 / NCPPB 4357 / Et1/99)).